A 120-amino-acid chain; its full sequence is Small ribosomal subunit protein uS13 (120 aa).

Residues 93–120 (GLPVRGQNTKNNARTRKGPRRTVANKKK) are disordered. Positions 105-120 (ARTRKGPRRTVANKKK) are enriched in basic residues.

The protein belongs to the universal ribosomal protein uS13 family. As to quaternary structure, part of the 30S ribosomal subunit. Has been shown to cross-link to S19 forming a loose heterodimer. Forms two bridges to the 50S subunit in the 70S ribosome.

Its function is as follows. Located at the top of the head of the 30S subunit, it contacts several helices of the 16S rRNA. In the 70S ribosome it contacts the 23S rRNA (bridge B1a) and protein L5 of the 50S subunit (bridge B1b), connecting the 2 subunits; these bridges are implicated in subunit movement. Contacts the tRNA in the A and P-sites. The protein is Small ribosomal subunit protein uS13 (rpsM) of Geobacillus stearothermophilus (Bacillus stearothermophilus).